A 319-amino-acid polypeptide reads, in one-letter code: Pectinesterase (319 aa).

Q1 bears the Pyrrolidone carboxylic acid mark. The substrate site is built by T83 and Q113. Catalysis depends on D136, which acts as the Proton donor. A disulfide bridge links C150 with C170. D157 serves as the catalytic Nucleophile. 2 residues coordinate substrate: R225 and W227.

The protein belongs to the pectinesterase family.

It is found in the secreted. The protein resides in the cell wall. It carries out the reaction [(1-&gt;4)-alpha-D-galacturonosyl methyl ester](n) + n H2O = [(1-&gt;4)-alpha-D-galacturonosyl](n) + n methanol + n H(+). The protein operates within glycan metabolism; pectin degradation; 2-dehydro-3-deoxy-D-gluconate from pectin: step 1/5. Its function is as follows. Catalyzes the deesterification of methyl-esterified D-galactosiduronic acid units in pectic compounds. It participates in modulating cell wall during fruit ripening, cell wall extension during pollen germination, and in defense mechanisms against pathogens. This is Pectinesterase from Daucus carota (Wild carrot).